An 858-amino-acid chain; its full sequence is Leucine--tRNA ligase (858 aa).

Residues 42 to 52 carry the 'HIGH' region motif; the sequence is PYPSGRLHMGH. A 'KMSKS' region motif is present at residues 618 to 622; sequence KMSKS. Lysine 621 serves as a coordination point for ATP.

This sequence belongs to the class-I aminoacyl-tRNA synthetase family.

It localises to the cytoplasm. The enzyme catalyses tRNA(Leu) + L-leucine + ATP = L-leucyl-tRNA(Leu) + AMP + diphosphate. The sequence is that of Leucine--tRNA ligase from Aliivibrio fischeri (strain ATCC 700601 / ES114) (Vibrio fischeri).